The primary structure comprises 522 residues: Golgin subfamily A member 6-like protein 10 (522 aa).

Residues 1 to 11 (MWPQPRLPPHP) show a composition bias toward pro residues. A disordered region spans residues 1-77 (MWPQPRLPPH…DSATGIYGEG (77 aa)). A compositionally biased stretch (polar residues) spans 51-62 (NGSSPDTATSGG). The stretch at 157-328 (SKVEQLQDET…RLCEQEKLPG (172 aa)) forms a coiled coil. Over residues 439–452 (KELEKSGGAEEPRG) the composition is skewed to basic and acidic residues. The tract at residues 439–503 (KELEKSGGAE…TGEAAGGAEE (65 aa)) is disordered. Composition is skewed to low complexity over residues 456 to 471 (AAAA…PQGA) and 489 to 503 (GEAV…GAEE).

The protein belongs to the GOLGA6 family.

This Homo sapiens (Human) protein is Golgin subfamily A member 6-like protein 10.